A 1802-amino-acid chain; its full sequence is Bromodomain and WD repeat-containing protein 3 (1802 aa).

8 WD repeats span residues 170-209 (IKMH…IWAT), 213-251 (RLLA…VWCL), 255-297 (APVA…FWQW), 307-347 (RPVK…IYYL), 353-393 (EKIA…IWQY), 400-452 (SIVL…VWNS), 456-495 (QLLH…IWDL), and 502-542 (RNYF…LFGF). S693 and S703 each carry phosphoserine. The interval 768–910 (KPSYTTQRND…PKQTRKKKGG (143 aa)) is disordered. Positions 785–795 (SLRRTQRKRQH) are enriched in basic residues. Over residues 796–817 (TYQTRSNIEHNSQASCQNSGVQ) the composition is skewed to polar residues. A compositionally biased stretch (acidic residues) spans 818–829 (EDSDSSSEEDET). Over residues 846–859 (SESSSSDSSSEYSD) the composition is skewed to low complexity. A phosphoserine mark is found at S885 and S886. A compositionally biased stretch (basic and acidic residues) spans 889–898 (ENLKSLEERQ). Basic residues predominate over residues 899–909 (KKPKQTRKKKG). Residues 1138–1245 (WGAHSRDEEC…DVLLRFIGDQ (108 aa)) form the Bromo 1 domain. Disordered regions lie at residues 1262–1292 (RNST…VKCR), 1326–1361 (RQPA…LSED), 1438–1500 (IQSQ…SPVS), and 1520–1725 (SSSS…RAKR). The segment covering 1266–1278 (DAEEDTEIVDLDS) has biased composition (acidic residues). Positions 1300 to 1430 (CNPDAWKKQC…ALFESHIKNI (131 aa)) constitute a Bromo 2 domain. Basic residues predominate over residues 1441-1453 (QKRRRPRYRKRLR). Residues 1454 to 1468 (SSSSSLSSSGAPSPK) are compositionally biased toward low complexity. Residues 1479–1499 (KNDQNTSVSHARTSSPFSSPV) show a composition bias toward polar residues. Low complexity predominate over residues 1520 to 1533 (SSSSFGGYSRSGNS). Phosphoserine occurs at positions 1577 and 1579. Positions 1587-1600 (GEDKEKKETKEKSH) are enriched in basic and acidic residues. The span at 1601-1626 (LSTSESGELGSSLSSESTCGSDSDSE) shows a compositional bias: low complexity. The segment covering 1627–1643 (STSRTDQDYVDGDHDYS) has biased composition (basic and acidic residues). Basic residues-rich tracts occupy residues 1649–1666 (RPKR…RNWK) and 1684–1697 (RGGR…RGSR). At S1763 the chain carries Phosphoserine.

Found in most adult tissues. Down-regulated in a majority of the B-CLL cases examined.

Plays a role in the regulation of cell morphology and cytoskeletal organization. Required in the control of cell shape. This Homo sapiens (Human) protein is Bromodomain and WD repeat-containing protein 3 (BRWD3).